The following is a 463-amino-acid chain: ATP synthase subunit beta (463 aa).

152–159 (GGAGVGKT) is an ATP binding site.

This sequence belongs to the ATPase alpha/beta chains family. F-type ATPases have 2 components, CF(1) - the catalytic core - and CF(0) - the membrane proton channel. CF(1) has five subunits: alpha(3), beta(3), gamma(1), delta(1), epsilon(1). CF(0) has three main subunits: a(1), b(2) and c(9-12). The alpha and beta chains form an alternating ring which encloses part of the gamma chain. CF(1) is attached to CF(0) by a central stalk formed by the gamma and epsilon chains, while a peripheral stalk is formed by the delta and b chains.

It is found in the cell inner membrane. It catalyses the reaction ATP + H2O + 4 H(+)(in) = ADP + phosphate + 5 H(+)(out). Functionally, produces ATP from ADP in the presence of a proton gradient across the membrane. The catalytic sites are hosted primarily by the beta subunits. The polypeptide is ATP synthase subunit beta (Shewanella sp. (strain ANA-3)).